The chain runs to 117 residues: Protein P16 (117 aa).

Residues 7–24 form a helical membrane-spanning segment; the sequence is LYWVGGGLVLILIWLWFR.

The protein resides in the virion membrane. In terms of biological role, protein of the infection vertex complex, which increases the vertex stability. Anchors the vertex structure to the viral membrane. Essential for viral infectivity. The chain is Protein P16 (XVI) from Enterobacteria phage PRD1 (Bacteriophage PRD1).